Reading from the N-terminus, the 89-residue chain is Pyrin domain-containing protein 1 (89 aa).

The 89-residue stretch at 1–89 (MGTKREAILK…EEAARLQRAA (89 aa)) folds into the Pyrin domain.

In terms of assembly, interacts with PYCARD/ASC (via pyrin domain). Phosphorylated. Predominantly expressed in monocytes, macrophages and granulocytes.

It localises to the cytoplasm. Functionally, associates with PYCARD/ASC and modulates its ability to collaborate with MEFV/pyrin and NLRP3/cryopyrin in NF-kappa-B and pro-caspase-1 activation. Suppresses kinase activity of NF-kappa-B inhibitor kinase (IKK) complex, expression of NF-kappa-B inducible genes and inhibits NF-kappa-B activation by cytokines and LPS. In Homo sapiens (Human), this protein is Pyrin domain-containing protein 1.